Consider the following 162-residue polypeptide: tRNA (cytidine(34)-2'-O)-methyltransferase (162 aa).

S-adenosyl-L-methionine contacts are provided by L83, G105, I127, and S135.

It belongs to the class IV-like SAM-binding methyltransferase superfamily. RNA methyltransferase TrmH family. TrmL subfamily. In terms of assembly, homodimer.

The protein localises to the cytoplasm. The enzyme catalyses cytidine(34) in tRNA + S-adenosyl-L-methionine = 2'-O-methylcytidine(34) in tRNA + S-adenosyl-L-homocysteine + H(+). It catalyses the reaction 5-carboxymethylaminomethyluridine(34) in tRNA(Leu) + S-adenosyl-L-methionine = 5-carboxymethylaminomethyl-2'-O-methyluridine(34) in tRNA(Leu) + S-adenosyl-L-homocysteine + H(+). Functionally, methylates the ribose at the nucleotide 34 wobble position in the two leucyl isoacceptors tRNA(Leu)(CmAA) and tRNA(Leu)(cmnm5UmAA). Catalyzes the methyl transfer from S-adenosyl-L-methionine to the 2'-OH of the wobble nucleotide. The chain is tRNA (cytidine(34)-2'-O)-methyltransferase from Yersinia pestis.